Here is a 447-residue protein sequence, read N- to C-terminus: Phosphoglucosamine mutase (447 aa).

The active-site Phosphoserine intermediate is S103. S103, D242, D244, and D246 together coordinate Mg(2+). S103 is modified (phosphoserine).

The protein belongs to the phosphohexose mutase family. Mg(2+) serves as cofactor. Post-translationally, activated by phosphorylation.

The enzyme catalyses alpha-D-glucosamine 1-phosphate = D-glucosamine 6-phosphate. In terms of biological role, catalyzes the conversion of glucosamine-6-phosphate to glucosamine-1-phosphate. The chain is Phosphoglucosamine mutase from Jannaschia sp. (strain CCS1).